Here is a 240-residue protein sequence, read N- to C-terminus: UDP-2,3-diacylglucosamine hydrolase (240 aa).

The Mn(2+) site is built by aspartate 8, histidine 10, aspartate 41, asparagine 79, and histidine 114. 79-80 contacts substrate; sequence NR. Positions 122, 160, 164, 167, and 195 each coordinate substrate. Mn(2+) is bound by residues histidine 195 and histidine 197.

This sequence belongs to the LpxH family. Requires Mn(2+) as cofactor.

The protein localises to the cell inner membrane. It catalyses the reaction UDP-2-N,3-O-bis[(3R)-3-hydroxytetradecanoyl]-alpha-D-glucosamine + H2O = 2-N,3-O-bis[(3R)-3-hydroxytetradecanoyl]-alpha-D-glucosaminyl 1-phosphate + UMP + 2 H(+). The protein operates within glycolipid biosynthesis; lipid IV(A) biosynthesis; lipid IV(A) from (3R)-3-hydroxytetradecanoyl-[acyl-carrier-protein] and UDP-N-acetyl-alpha-D-glucosamine: step 4/6. Functionally, hydrolyzes the pyrophosphate bond of UDP-2,3-diacylglucosamine to yield 2,3-diacylglucosamine 1-phosphate (lipid X) and UMP by catalyzing the attack of water at the alpha-P atom. Involved in the biosynthesis of lipid A, a phosphorylated glycolipid that anchors the lipopolysaccharide to the outer membrane of the cell. The protein is UDP-2,3-diacylglucosamine hydrolase of Salmonella agona (strain SL483).